We begin with the raw amino-acid sequence, 461 residues long: Cysteine--tRNA ligase (461 aa).

Position 30 (C30) interacts with Zn(2+). The 'HIGH' region motif lies at V32–H42. 3 residues coordinate Zn(2+): C211, H236, and E240. The 'KMSKS' region signature appears at K268 to S272. Position 271 (K271) interacts with ATP.

It belongs to the class-I aminoacyl-tRNA synthetase family. In terms of assembly, monomer. Zn(2+) is required as a cofactor.

The protein resides in the cytoplasm. It catalyses the reaction tRNA(Cys) + L-cysteine + ATP = L-cysteinyl-tRNA(Cys) + AMP + diphosphate. This is Cysteine--tRNA ligase from Shewanella sp. (strain ANA-3).